We begin with the raw amino-acid sequence, 94 residues long: Neutrophil antibiotic peptide NP-1 (94 aa).

The first 19 residues, 1 to 19 (MRTLTLLTALLLLALHTQA), serve as a signal peptide directing secretion. Positions 20–62 (KSPQGTAEEAPDQEQLVMEDQDISISFGGDKGTALQDADVKAG) are excised as a propeptide. Intrachain disulfides connect Cys65–Cys93, Cys67–Cys82, and Cys72–Cys92. A Phosphotyrosine modification is found at Tyr84.

This sequence belongs to the alpha-defensin family. In terms of tissue distribution, highest expression in bone marrow and to a much lesser extent in small intestine.

Its subcellular location is the secreted. In terms of biological role, active in vitro against S.aureus, fungi, Gram-positive and Gram-negative bacteria and to a lesser extent against an enveloped virus. This Rattus norvegicus (Rat) protein is Neutrophil antibiotic peptide NP-1.